A 92-amino-acid polypeptide reads, in one-letter code: Small ribosomal subunit protein uS19c (92 aa).

It belongs to the universal ribosomal protein uS19 family.

The protein resides in the plastid. It is found in the chloroplast. In terms of biological role, protein S19 forms a complex with S13 that binds strongly to the 16S ribosomal RNA. The protein is Small ribosomal subunit protein uS19c of Rhodomonas salina (Cryptomonas salina).